A 184-amino-acid polypeptide reads, in one-letter code: Elongation factor P (184 aa).

Belongs to the elongation factor P family.

The protein resides in the cytoplasm. It functions in the pathway protein biosynthesis; polypeptide chain elongation. Its function is as follows. Involved in peptide bond synthesis. Stimulates efficient translation and peptide-bond synthesis on native or reconstituted 70S ribosomes in vitro. Probably functions indirectly by altering the affinity of the ribosome for aminoacyl-tRNA, thus increasing their reactivity as acceptors for peptidyl transferase. The protein is Elongation factor P of Albidiferax ferrireducens (strain ATCC BAA-621 / DSM 15236 / T118) (Rhodoferax ferrireducens).